The primary structure comprises 205 residues: Protein-L-isoaspartate O-methyltransferase (205 aa).

Ser-56 is an active-site residue.

It belongs to the methyltransferase superfamily. L-isoaspartyl/D-aspartyl protein methyltransferase family.

The protein localises to the cytoplasm. It carries out the reaction [protein]-L-isoaspartate + S-adenosyl-L-methionine = [protein]-L-isoaspartate alpha-methyl ester + S-adenosyl-L-homocysteine. Functionally, catalyzes the methyl esterification of L-isoaspartyl residues in peptides and proteins that result from spontaneous decomposition of normal L-aspartyl and L-asparaginyl residues. It plays a role in the repair and/or degradation of damaged proteins. In Aeromonas hydrophila subsp. hydrophila (strain ATCC 7966 / DSM 30187 / BCRC 13018 / CCUG 14551 / JCM 1027 / KCTC 2358 / NCIMB 9240 / NCTC 8049), this protein is Protein-L-isoaspartate O-methyltransferase.